The sequence spans 236 residues: Small ribosomal subunit protein uS2c (236 aa).

This sequence belongs to the universal ribosomal protein uS2 family.

Its subcellular location is the plastid. It localises to the chloroplast. The sequence is that of Small ribosomal subunit protein uS2c (rps2) from Daucus carota (Wild carrot).